A 353-amino-acid polypeptide reads, in one-letter code: Protein RecA (353 aa).

Residue 68-75 (GPESSGKT) coordinates ATP.

The protein belongs to the RecA family.

It localises to the cytoplasm. In terms of biological role, can catalyze the hydrolysis of ATP in the presence of single-stranded DNA, the ATP-dependent uptake of single-stranded DNA by duplex DNA, and the ATP-dependent hybridization of homologous single-stranded DNAs. It interacts with LexA causing its activation and leading to its autocatalytic cleavage. The protein is Protein RecA of Roseiflexus castenholzii (strain DSM 13941 / HLO8).